Reading from the N-terminus, the 354-residue chain is GTPase Obg (354 aa).

The Obg domain occupies 1-159; the sequence is MKFLDQCKIY…LWVWLRLKLI (159 aa). The region spanning 160 to 328 is the OBG-type G domain; it reads ADVGLVGLPN…LLRAAFTQVR (169 aa). Residues 166-173, 191-195, 213-216, 280-283, and 309-311 contribute to the GTP site; these read GLPNAGKS, FTTLT, DIPG, NKVD, and SGV. Mg(2+) is bound by residues S173 and T193. Residues 333 to 354 are disordered; that stretch reads ETPAEAAIDEAPEEETPGGWQP. A compositionally biased stretch (acidic residues) spans 339–348; the sequence is AIDEAPEEET.

This sequence belongs to the TRAFAC class OBG-HflX-like GTPase superfamily. OBG GTPase family. Monomer. Mg(2+) serves as cofactor.

The protein localises to the cytoplasm. An essential GTPase which binds GTP, GDP and possibly (p)ppGpp with moderate affinity, with high nucleotide exchange rates and a fairly low GTP hydrolysis rate. Plays a role in control of the cell cycle, stress response, ribosome biogenesis and in those bacteria that undergo differentiation, in morphogenesis control. In Caulobacter sp. (strain K31), this protein is GTPase Obg.